The primary structure comprises 496 residues: 6-phosphogluconate dehydrogenase, decarboxylating (496 aa).

NADP(+) contacts are provided by residues 13-18 (GLDVSI), 24-26 (DNV), 68-70 (ITH), and Asn96. Substrate-binding positions include Asn96 and 122-124 (SGG). Catalysis depends on Lys178, which acts as the Proton acceptor. Residue 181 to 182 (HN) participates in substrate binding. The active-site Proton donor is the Glu185. Residues Arg300 and His468 each coordinate substrate. The disordered stretch occupies residues 476–496 (PGEDPGPVSKGPHHYEWRPAK).

Belongs to the 6-phosphogluconate dehydrogenase family. Homodimer.

The protein resides in the cytoplasm. It carries out the reaction 6-phospho-D-gluconate + NADP(+) = D-ribulose 5-phosphate + CO2 + NADPH. The protein operates within carbohydrate degradation; pentose phosphate pathway; D-ribulose 5-phosphate from D-glucose 6-phosphate (oxidative stage): step 3/3. Functionally, catalyzes the oxidative decarboxylation of 6-phosphogluconate to ribulose 5-phosphate and CO(2), with concomitant reduction of NADP to NADPH. This Emericella nidulans (strain FGSC A4 / ATCC 38163 / CBS 112.46 / NRRL 194 / M139) (Aspergillus nidulans) protein is 6-phosphogluconate dehydrogenase, decarboxylating.